A 273-amino-acid polypeptide reads, in one-letter code: 4-hydroxy-tetrahydrodipicolinate reductase (273 aa).

NAD(+)-binding positions include 8 to 13 (GAAGRM), Glu34, 102 to 104 (GTT), and 128 to 131 (SSNM). His160 (proton donor/acceptor) is an active-site residue. His161 contributes to the (S)-2,3,4,5-tetrahydrodipicolinate binding site. Lys164 (proton donor) is an active-site residue. 170–171 (GT) provides a ligand contact to (S)-2,3,4,5-tetrahydrodipicolinate.

This sequence belongs to the DapB family.

The protein localises to the cytoplasm. The enzyme catalyses (S)-2,3,4,5-tetrahydrodipicolinate + NAD(+) + H2O = (2S,4S)-4-hydroxy-2,3,4,5-tetrahydrodipicolinate + NADH + H(+). It carries out the reaction (S)-2,3,4,5-tetrahydrodipicolinate + NADP(+) + H2O = (2S,4S)-4-hydroxy-2,3,4,5-tetrahydrodipicolinate + NADPH + H(+). It participates in amino-acid biosynthesis; L-lysine biosynthesis via DAP pathway; (S)-tetrahydrodipicolinate from L-aspartate: step 4/4. In terms of biological role, catalyzes the conversion of 4-hydroxy-tetrahydrodipicolinate (HTPA) to tetrahydrodipicolinate. The polypeptide is 4-hydroxy-tetrahydrodipicolinate reductase (Methanobrevibacter smithii (strain ATCC 35061 / DSM 861 / OCM 144 / PS)).